A 921-amino-acid polypeptide reads, in one-letter code: Probable glucan 1,3-alpha-glucosidase (921 aa).

Residues 1 to 20 (MRSLLFVLSLICFCSQTALS) form the signal peptide. Asp-512 (nucleophile) is an active-site residue. Glu-515 is a catalytic residue. Catalysis depends on Asp-588, which acts as the Proton donor. Residues Asn-689 and Asn-804 are each glycosylated (N-linked (GlcNAc...) asparagine).

It belongs to the glycosyl hydrolase 31 family. In terms of assembly, heterodimer of a catalytic alpha subunit (PSL5) and a beta subunit (PSL4). Expressed in roots, rosette leaves, leaf blades, mature stems, cauline leaves, flower buds, flowers and siliques.

The protein localises to the endoplasmic reticulum. The enzyme catalyses Hydrolysis of terminal (1-&gt;3)-alpha-D-glucosidic links in (1-&gt;3)-alpha-D-glucans.. It participates in glycan metabolism; N-glycan metabolism. Its function is as follows. Cleaves sequentially the 2 innermost alpha-1,3-linked glucose residues from the Glc(2)Man(9)GlcNAc(2) oligosaccharide precursor of immature glycoproteins. Essential for stable accumulation of the receptor EFR that determines the specific perception of bacterial elongation factor Tu (EF-Tu), a potent elicitor of the defense response to pathogen-associated molecular patterns (PAMPs). Required for sustained activation of EFR-mediated signaling, but not receptor FLS2-mediated signaling elicited by the bacterial flagellin flg22. This is Probable glucan 1,3-alpha-glucosidase (PSL5) from Arabidopsis thaliana (Mouse-ear cress).